The primary structure comprises 245 residues: 3-dehydroquinate dehydratase (245 aa).

3-dehydroquinate is bound by residues 35-37 (EFR) and Arg70. His132 serves as the catalytic Proton donor/acceptor. The Schiff-base intermediate with substrate role is filled by Lys158. 3-dehydroquinate is bound by residues Arg199, Thr220, and Gln224.

Belongs to the type-I 3-dehydroquinase family. As to quaternary structure, homodimer.

It carries out the reaction 3-dehydroquinate = 3-dehydroshikimate + H2O. It participates in metabolic intermediate biosynthesis; chorismate biosynthesis; chorismate from D-erythrose 4-phosphate and phosphoenolpyruvate: step 3/7. In terms of biological role, involved in the third step of the chorismate pathway, which leads to the biosynthesis of aromatic amino acids. Catalyzes the cis-dehydration of 3-dehydroquinate (DHQ) and introduces the first double bond of the aromatic ring to yield 3-dehydroshikimate. This Haloquadratum walsbyi (strain DSM 16790 / HBSQ001) protein is 3-dehydroquinate dehydratase.